Here is a 303-residue protein sequence, read N- to C-terminus: Thioesterase poxG (303 aa).

The protein belongs to the lcsJ thioesterase family.

The protein operates within secondary metabolite biosynthesis. Thioesterase; part of the gene cluster that mediates the biosynthesis of oxaleimides, cytotoxic compounds containing an unusual disubstituted succinimide moiety. The first step of the pathway is provided by the HR-PKS poxF that serves in a new mode of collaborative biosynthesis with the PKS-NRPS poxE, by providing the olefin containing amino acid substrate via the synthesis of an ACP-bound dec-4-enoate. The cytochrome P450 monooxygenase poxM-catalyzed oxidation at the alpha-position creates the enzyme-bound 2-hydroxydec-4-enoyl-ACP thioester, which may be prone to spontaneous hydrolysis to yield 2-hydroxydec-4-enoic acid due to increased electrophilicity of the carbonyl. 2-hydroxydec-4-enoic acid can then be further oxidized by poxM to yield the alpha-ketoacid 2-oxodec-4-enoicacid, which is reductively aminated by the aminotransferase poxL to yield (S,E)-2-aminodec-4-enoic acid. The Hybrid PKS-NRPS synthetase poxE then performs condensation between the octaketide product of its PKS modules and the amino group of (S,E)-2-aminodec-4-enoic acid which is activated and incorporated by the adenylation domain. The resulting aminoacyl product can be cyclized by the Diels-Alderase PoxQ and reductively released by the reductive (R) domain of poxE to yield an aldehyde intermediate. The released aldehyde is then substrate for a Knoevenagel condensation by the hydrolyase poxO followed by an oxidation at the 5-position of the pyrrolidone ring. The presence of the olefin from the amino acid building block allows for migration of the substituted allyl group to occur. This allylic transposition reaction takes place in a conjugate addition, semipinacol-like fashion to yield a succinimide intermediate. Iterative two-electron oxidations of the C7 methyl of the succinimide intermediate to the carboxylic acid can be catalyzed by one of two remaining cytochrome P450 monooxygenasess poxC or poxD to yield oxaleimide A. Subsequent oxidation yields the maleimide scaffold oxaleimide I. Both oxaleimide A and oxaleimide I can undergo oxidative modifications in the decalin ring to yield the series of products oxaleimides B to H. The protein is Thioesterase poxG of Penicillium oxalicum (strain 114-2 / CGMCC 5302) (Penicillium decumbens).